The primary structure comprises 694 residues: MYTDFSKLRNIGISAHIDSGKTTLTERILFYTKRIHAIHEVKGKDGVGATMDSMELERERGITIASAATHCEWKGLHLNIIDTPGHVDFTIEVERSLRVLDGAILVLCSVAGVQSQSLTVDRQMRRYNVPRLAFVNKCDRSGANPIRVKDQLREKLQHNPVLMQLPIGLEDKFEGVVDLVKMKAFRFSGDDGEVITESEIPADMQADAARAREELLDAASMFSDELTDAILEDRVTEELIKAAVRKGTLALKLTPVFMGSAYKNKAVQKLLDGVVDYLPDPTEVVNEAHDLTKDEEKVALTIDNEKPTVALAFKLEDGRYGQLTYLRIYQGKLSRDMFITNMRTKKDHRIGRLVRMHSDQMEDIDAAGSGDIVAMFGVDCNSGDTFTDGTVKLNMTSMHVPEPVIALSIKPVDSKSETNMGKALRRFTREDPTFRAGLDEESGETIIRGMGELHLEVYIERMKREYNCIVEVSPPQVAYRETVSQRADFAYTHKKQTGGSGQFGRVCGYIEPCEQQFEFVDDVVGGAIPREFISAVEKGFRSMLAKGRLLGFPVVNTRVVINDGASHAVDSSDIAFQEAARGAWREGFDRAKPRLLEPIMRVVCEGPAEFSGGILGTLMQRRAMIIGSQDDGGLARIEAEVPLAEMFGYSTTLRSATQGKAEFSMEFSRYLPVPAAMAEELMTKASKKAEGGKK.

One can recognise a tr-type G domain in the interval 6 to 282 (SKLRNIGISA…GVVDYLPDPT (277 aa)). Residues 15–22 (AHIDSGKT), 82–86 (DTPGH), and 136–139 (NKCD) each bind GTP.

It belongs to the TRAFAC class translation factor GTPase superfamily. Classic translation factor GTPase family. EF-G/EF-2 subfamily.

Its subcellular location is the cytoplasm. In terms of biological role, catalyzes the GTP-dependent ribosomal translocation step during translation elongation. During this step, the ribosome changes from the pre-translocational (PRE) to the post-translocational (POST) state as the newly formed A-site-bound peptidyl-tRNA and P-site-bound deacylated tRNA move to the P and E sites, respectively. Catalyzes the coordinated movement of the two tRNA molecules, the mRNA and conformational changes in the ribosome. The protein is Elongation factor G 2 of Anaeromyxobacter dehalogenans (strain 2CP-C).